The primary structure comprises 238 residues: Orotidine 5'-phosphate decarboxylase (238 aa).

Residues Asp-10, Lys-32, Asp-59 to Thr-68, Thr-122, Arg-184, Gln-193, Gly-213, and Arg-214 each bind substrate. Lys-61 (proton donor) is an active-site residue.

It belongs to the OMP decarboxylase family. Type 1 subfamily. In terms of assembly, homodimer.

It catalyses the reaction orotidine 5'-phosphate + H(+) = UMP + CO2. It participates in pyrimidine metabolism; UMP biosynthesis via de novo pathway; UMP from orotate: step 2/2. Functionally, catalyzes the decarboxylation of orotidine 5'-monophosphate (OMP) to uridine 5'-monophosphate (UMP). The protein is Orotidine 5'-phosphate decarboxylase of Bacillus cereus (strain ZK / E33L).